Here is a 417-residue protein sequence, read N- to C-terminus: Putative competence-damage inducible protein (417 aa).

This sequence belongs to the CinA family.

The sequence is that of Putative competence-damage inducible protein from Shouchella clausii (strain KSM-K16) (Alkalihalobacillus clausii).